Reading from the N-terminus, the 149-residue chain is Glutamate mutase sigma subunit (149 aa).

Residues 3–140 (KATLVIGVIG…AHDINQRHDV (138 aa)) form the B12-binding domain. Adenosylcob(III)alamin is bound by residues 13-17 (ADCHA), His16, 61-63 (SSI), and 93-97 (NLVVG).

It belongs to the methylaspartate mutase GlmS subunit family. As to quaternary structure, heterotetramer composed of 2 epsilon subunits (GlmE) and 2 sigma subunits (GlmS). GlmE exists as a homodimer and GlmS as a monomer. Requires adenosylcob(III)alamin as cofactor.

It carries out the reaction (2S,3S)-3-methyl-L-aspartate = L-glutamate. The protein operates within amino-acid degradation; L-glutamate degradation via mesaconate pathway; acetate and pyruvate from L-glutamate: step 1/4. In terms of biological role, catalyzes the carbon skeleton rearrangement of L-glutamate to L-threo-3-methylaspartate ((2S,3S)-3-methylaspartate). This is Glutamate mutase sigma subunit from Escherichia coli O157:H7.